The chain runs to 260 residues: MAFVPPQAGYDRAITVFSPDGRLFQVNYAREAVKRGATAVGVKWKDGVVLAVEKRITSKLIEPSSYEKIFLIDDHIAAAPSGIIADARVLVDRARLEAQIYRLTYGEPVPLTVLVKKICDLKQAHTQYGGVRPFGAALLMAGVNEKPELFETDPSGAYFEWKAVAIGSGRNTAMAIFEEHYRDDIGKDDAIKLAILALAKTLEEPTAEGIEVAYITMDEKRWKKLPREELEKYLNEILQEVKEEEVEEKQEDYSELDQNY.

This sequence belongs to the peptidase T1A family. As to quaternary structure, the 20S proteasome core is composed of 14 alpha and 14 beta subunits that assemble into four stacked heptameric rings, resulting in a barrel-shaped structure. The two inner rings, each composed of seven catalytic beta subunits, are sandwiched by two outer rings, each composed of seven alpha subunits. The catalytic chamber with the active sites is on the inside of the barrel. Has a gated structure, the ends of the cylinder being occluded by the N-termini of the alpha-subunits. Is capped at one or both ends by the proteasome regulatory ATPase, PAN.

The protein localises to the cytoplasm. The formation of the proteasomal ATPase PAN-20S proteasome complex, via the docking of the C-termini of PAN into the intersubunit pockets in the alpha-rings, triggers opening of the gate for substrate entry. Interconversion between the open-gate and close-gate conformations leads to a dynamic regulation of the 20S proteasome proteolysis activity. Component of the proteasome core, a large protease complex with broad specificity involved in protein degradation. The chain is Proteasome subunit alpha from Thermococcus sp. (strain JCM 11816 / KS-1).